The following is a 35-amino-acid chain: Malate dehydrogenase, mitochondrial (35 aa).

Asparagine 7 is an NAD(+) binding site. Arginine 23 lines the substrate pocket.

This sequence belongs to the LDH/MDH superfamily. MDH type 1 family. Homodimer.

It is found in the mitochondrion matrix. It carries out the reaction (S)-malate + NAD(+) = oxaloacetate + NADH + H(+). In Capsicum annuum var. annuum (Red pepper), this protein is Malate dehydrogenase, mitochondrial.